A 241-amino-acid chain; its full sequence is Beta-nerve growth factor (241 aa).

The first 18 residues, 1-18 (MSMLFYTLITVFLIGIQA), serve as a signal peptide directing secretion. Positions 19 to 121 (EPYSDSNVLS…SVNRTHRSKR (103 aa)) are excised as a propeptide. 2 N-linked (GlcNAc...) asparagine glycosylation sites follow: N69 and N114. 3 disulfide bridges follow: C136-C201, C179-C229, and C189-C231.

It belongs to the NGF-beta family. As to quaternary structure, homodimer. The homodimer interacts with a single NTRK1 chain. The homodimer interacts with a single NGFR chain. The NGF dimer interacts with a single SORCS2 chain (via extracellular domain). The NGF precursor (proNGF) binds to a receptor complex formed by SORT1 and NGFR, which leads to NGF endocytosis. Both mature NGF and the immature NGF precursor (proNGF) interact with SORCS2 and with the heterodimer formed by SORCS2 and NGFR (via extracellular domains). The NGF precursor (proNGF) has much higher affinity for SORCS2 than mature NGF. The NGF precursor (proNGF) has much higher affinity for SORT1 than mature NGF. Interacts with ADAM10 in a divalent cation-dependent manner. Interacts with SORCS3.

It localises to the secreted. Its subcellular location is the endosome lumen. Its function is as follows. Nerve growth factor is important for the development and maintenance of the sympathetic and sensory nervous systems. Extracellular ligand for the NTRK1 and NGFR receptors, activates cellular signaling cascades through those receptor tyrosine kinase to regulate neuronal proliferation, differentiation and survival. Inhibits metalloproteinase dependent proteolysis of platelet glycoprotein VI. In Cavia porcellus (Guinea pig), this protein is Beta-nerve growth factor (NGF).